Reading from the N-terminus, the 269-residue chain is Eukaryotic translation initiation factor 3 subunit G-1 (269 aa).

Residues 188-266 (AAIRISNLSE…LILSVEWSKP (79 aa)) form the RRM domain.

The protein belongs to the eIF-3 subunit G family. Component of the eukaryotic translation initiation factor 3 (eIF-3) complex. The eIF-3 complex interacts with pix.

It is found in the cytoplasm. Its function is as follows. RNA-binding component of the eukaryotic translation initiation factor 3 (eIF-3) complex, which is involved in protein synthesis of a specialized repertoire of mRNAs and, together with other initiation factors, stimulates binding of mRNA and methionyl-tRNAi to the 40S ribosome. The eIF-3 complex specifically targets and initiates translation of a subset of mRNAs involved in cell proliferation. This subunit can bind 18S rRNA. The protein is Eukaryotic translation initiation factor 3 subunit G-1 of Drosophila virilis (Fruit fly).